Consider the following 701-residue polypeptide: Elongation factor G (701 aa).

The 281-residue stretch at 10-290 (AKVRNIGIMA…AVVDYLPSPL (281 aa)) folds into the tr-type G domain. Residues 19–26 (AHIDAGKT), 83–87 (DTPGH), and 137–140 (NKMD) contribute to the GTP site.

It belongs to the TRAFAC class translation factor GTPase superfamily. Classic translation factor GTPase family. EF-G/EF-2 subfamily.

The protein localises to the cytoplasm. Its function is as follows. Catalyzes the GTP-dependent ribosomal translocation step during translation elongation. During this step, the ribosome changes from the pre-translocational (PRE) to the post-translocational (POST) state as the newly formed A-site-bound peptidyl-tRNA and P-site-bound deacylated tRNA move to the P and E sites, respectively. Catalyzes the coordinated movement of the two tRNA molecules, the mRNA and conformational changes in the ribosome. The sequence is that of Elongation factor G from Tropheryma whipplei (strain Twist) (Whipple's bacillus).